We begin with the raw amino-acid sequence, 663 residues long: MDRKQLANAIRALSMDGVQKANSGHPGAPMGMADIAEVLWRGHLNHNPSNPEWADRDRFVLSNGHGSMLIYSLLHLSGYELSIDDLKNFRQLHSKTPGHPEYGYAPGIETTTGPLGQGITNAVGMAMAEKALAAQFNKEGHDIVDHFTYVFMGDGCLMEGISHEACSLAGTLGLGKLIAFWDDNGISIDGHVEGWFSDDTPKRFEAYGWHVIPAVDGHNAEAINAAIEAAKADPRPTLICTKTIIGFGSPNKSGSHDCHGAPLGAEEIAATRKELGWEHGPFEIPQEVYAEWSAKEAGAAKEAAWNEKFAAYEAAYPELAAEFKRRVNGELPAQWEEKANQIIADLQANPANIASRKASQNALEAFGKMLPEFMGGSADLAPSNLTMWSGSKSLEASDFSGNYIHYGVREFGMTAIMNGIALHGGFVPYGATFLMFMEYARNAMRMAALMKVQNIQVYTHDSIGLGEDGPTHQPVEQIASLRLTPNMSTWRPCDQVESAVAWKLAIERKDGPSALIFSRQNLAQQPRSAEQVADIAKGGYILKDSDGKPELILIATGSEVELAVKAAEQLTAEGKKVRVVSMPATDTFDKQDAAYREAVLPSDVTARIAIEAGIADFWYKYVGFDGRIIGMTTFGESAPADQLFEMFGFTVENVVNTAKELLA.

H25 contributes to the substrate binding site. Thiamine diphosphate-binding positions include H65 and 113–115 (GPL). D154 contributes to the Mg(2+) binding site. Positions 155 and 184 each coordinate thiamine diphosphate. Mg(2+)-binding residues include N184 and I186. H259, R356, and S383 together coordinate substrate. Residue H259 participates in thiamine diphosphate binding. E410 functions as the Proton donor in the catalytic mechanism. F436 serves as a coordination point for thiamine diphosphate. Residues H460, D468, and R519 each contribute to the substrate site.

This sequence belongs to the transketolase family. In terms of assembly, homodimer. Mg(2+) serves as cofactor. The cofactor is Ca(2+). Requires Mn(2+) as cofactor. Co(2+) is required as a cofactor. It depends on thiamine diphosphate as a cofactor.

It catalyses the reaction D-sedoheptulose 7-phosphate + D-glyceraldehyde 3-phosphate = aldehydo-D-ribose 5-phosphate + D-xylulose 5-phosphate. Catalyzes the transfer of a two-carbon ketol group from a ketose donor to an aldose acceptor, via a covalent intermediate with the cofactor thiamine pyrophosphate. This is Transketolase 2 (tkt2) from Vibrio vulnificus (strain CMCP6).